Consider the following 574-residue polypeptide: Pentatricopeptide repeat-containing protein At5g25630 (574 aa).

Basic and acidic residues predominate over residues 1-21 (MEDVNQEKKKVPPMSEPERST). The segment at 1–25 (MEDVNQEKKKVPPMSEPERSTPIKT) is disordered. PPR repeat units lie at residues 44–78 (TVRS…GHRP), 79–113 (SLIS…GTKL), 114–148 (DSIF…GLNP), 149–183 (TTST…GNVD), 187–221 (NIRT…GVRP), 222–258 (DTVT…KAKP), 259–293 (NGRT…RVEA), 294–328 (NLVV…NVKA), 329–363 (DVIT…GVKP), 364–394 (DAHA…LIVE), 398–432 (NVVI…GVSP), and 433–467 (NIKT…GVKP).

The protein belongs to the PPR family. P subfamily.

In Arabidopsis thaliana (Mouse-ear cress), this protein is Pentatricopeptide repeat-containing protein At5g25630.